A 186-amino-acid polypeptide reads, in one-letter code: Peptidyl-tRNA hydrolase (186 aa).

Y16 provides a ligand contact to tRNA. The active-site Proton acceptor is the H21. Positions 60 and 62 each coordinate tRNA.

Belongs to the PTH family. In terms of assembly, monomer.

Its subcellular location is the cytoplasm. The enzyme catalyses an N-acyl-L-alpha-aminoacyl-tRNA + H2O = an N-acyl-L-amino acid + a tRNA + H(+). Hydrolyzes ribosome-free peptidyl-tRNAs (with 1 or more amino acids incorporated), which drop off the ribosome during protein synthesis, or as a result of ribosome stalling. Its function is as follows. Catalyzes the release of premature peptidyl moieties from peptidyl-tRNA molecules trapped in stalled 50S ribosomal subunits, and thus maintains levels of free tRNAs and 50S ribosomes. This is Peptidyl-tRNA hydrolase from Tropheryma whipplei (strain Twist) (Whipple's bacillus).